A 201-amino-acid chain; its full sequence is Protease (201 aa).

Catalysis depends on residues His55, Asp72, and Cys122.

It belongs to the peptidase C5 family. Interacts with protease cofactor pVI-C; this interaction is necessary for protease activation.

The protein resides in the virion. It is found in the host nucleus. The catalysed reaction is Cleaves proteins of the adenovirus and its host cell at two consensus sites: -Yaa-Xaa-Gly-Gly-|-Xaa- and -Yaa-Xaa-Gly-Xaa-|-Gly- (in which Yaa is Met, Ile or Leu, and Xaa is any amino acid).. Its activity is regulated as follows. Requires DNA and protease cofactor for maximal activation. Inside nascent virions, becomes partially activated by binding to the viral DNA, allowing it to cleave the cofactor that binds to the protease and fully activates it. Actin, like the viral protease cofactor, seems to act as a cofactor in the cleavage of cytokeratin 18 and of actin itself. In terms of biological role, cleaves viral precursor proteins (pTP, pIIIa, pVI, pVII, pVIII, and pX) inside newly assembled particles giving rise to mature virions. Protease complexed to its cofactor slides along the viral DNA to specifically locate and cleave the viral precursors. Mature virions have a weakened organization compared to the unmature virions, thereby facilitating subsequent uncoating. Without maturation, the particle lacks infectivity and is unable to uncoat. Late in adenovirus infection, in the cytoplasm, may participate in the cytoskeleton destruction. Cleaves host cell cytoskeletal keratins K7 and K18. The chain is Protease from Pantherophis guttatus (Corn snake).